Here is a 389-residue protein sequence, read N- to C-terminus: Tubby-like F-box protein 11 (389 aa).

Residues 36–82 (DYRWSEIPEELLREILIRVEAADGGGWPSRRSVVACAGVCRGWRLLM) enclose the F-box domain. Residues 250 to 289 (STMEPQGVASEPSEFPLLGTRSTLSRSQSKPLRSSSSHLK) are disordered. A compositionally biased stretch (low complexity) spans 273–286 (LSRSQSKPLRSSSS).

Belongs to the TUB family. In terms of tissue distribution, ubiquitous.

This chain is Tubby-like F-box protein 11, found in Arabidopsis thaliana (Mouse-ear cress).